The sequence spans 102 residues: NADH-quinone oxidoreductase subunit K (102 aa).

The next 3 helical transmembrane spans lie at 4–24 (IPME…LVGL), 30–50 (MLFV…AFIV), and 62–82 (VMFL…LALL).

This sequence belongs to the complex I subunit 4L family. As to quaternary structure, NDH-1 is composed of 14 different subunits. Subunits NuoA, H, J, K, L, M, N constitute the membrane sector of the complex.

It localises to the cell inner membrane. It catalyses the reaction a quinone + NADH + 5 H(+)(in) = a quinol + NAD(+) + 4 H(+)(out). Functionally, NDH-1 shuttles electrons from NADH, via FMN and iron-sulfur (Fe-S) centers, to quinones in the respiratory chain. The immediate electron acceptor for the enzyme in this species is believed to be ubiquinone. Couples the redox reaction to proton translocation (for every two electrons transferred, four hydrogen ions are translocated across the cytoplasmic membrane), and thus conserves the redox energy in a proton gradient. The protein is NADH-quinone oxidoreductase subunit K of Chromohalobacter salexigens (strain ATCC BAA-138 / DSM 3043 / CIP 106854 / NCIMB 13768 / 1H11).